The chain runs to 253 residues: Testis-expressed protein 47 (253 aa).

The chain is Testis-expressed protein 47 (Tex47) from Mus musculus (Mouse).